Reading from the N-terminus, the 267-residue chain is Tryptophan synthase alpha chain (267 aa).

Active-site proton acceptor residues include Glu-49 and Asp-60.

This sequence belongs to the TrpA family. As to quaternary structure, tetramer of two alpha and two beta chains.

It catalyses the reaction (1S,2R)-1-C-(indol-3-yl)glycerol 3-phosphate + L-serine = D-glyceraldehyde 3-phosphate + L-tryptophan + H2O. Its pathway is amino-acid biosynthesis; L-tryptophan biosynthesis; L-tryptophan from chorismate: step 5/5. In terms of biological role, the alpha subunit is responsible for the aldol cleavage of indoleglycerol phosphate to indole and glyceraldehyde 3-phosphate. The sequence is that of Tryptophan synthase alpha chain from Geotalea uraniireducens (strain Rf4) (Geobacter uraniireducens).